Reading from the N-terminus, the 168-residue chain is G/U mismatch-specific DNA glycosylase (168 aa).

It belongs to the uracil-DNA glycosylase (UDG) superfamily. TDG/mug family. Binds DNA as a monomer.

The protein localises to the cytoplasm. The catalysed reaction is Specifically hydrolyzes mismatched double-stranded DNA and polynucleotides, releasing free uracil.. In terms of biological role, excises ethenocytosine and uracil, which can arise by alkylation or deamination of cytosine, respectively, from the corresponding mispairs with guanine in ds-DNA. It is capable of hydrolyzing the carbon-nitrogen bond between the sugar-phosphate backbone of the DNA and the mispaired base. The complementary strand guanine functions in substrate recognition. Required for DNA damage lesion repair in stationary-phase cells. The chain is G/U mismatch-specific DNA glycosylase from Escherichia coli (strain UTI89 / UPEC).